Consider the following 276-residue polypeptide: Dermonecrotic toxin LsaSicTox-alphaIB2i (276 aa).

The active site involves His5. Mg(2+)-binding residues include Glu25 and Asp27. His41 functions as the Nucleophile in the catalytic mechanism. Intrachain disulfides connect Cys45–Cys51 and Cys47–Cys190. Asp85 lines the Mg(2+) pocket. N-linked (GlcNAc...) asparagine glycosylation is found at Asn129 and Asn253.

Belongs to the arthropod phospholipase D family. Class II subfamily. Mg(2+) is required as a cofactor. As to expression, expressed by the venom gland.

The protein localises to the secreted. The enzyme catalyses an N-(acyl)-sphingosylphosphocholine = an N-(acyl)-sphingosyl-1,3-cyclic phosphate + choline. It catalyses the reaction an N-(acyl)-sphingosylphosphoethanolamine = an N-(acyl)-sphingosyl-1,3-cyclic phosphate + ethanolamine. The catalysed reaction is a 1-acyl-sn-glycero-3-phosphocholine = a 1-acyl-sn-glycero-2,3-cyclic phosphate + choline. It carries out the reaction a 1-acyl-sn-glycero-3-phosphoethanolamine = a 1-acyl-sn-glycero-2,3-cyclic phosphate + ethanolamine. In terms of biological role, dermonecrotic toxins cleave the phosphodiester linkage between the phosphate and headgroup of certain phospholipids (sphingolipid and lysolipid substrates), forming an alcohol (often choline) and a cyclic phosphate. This toxin acts on sphingomyelin (SM). It may also act on ceramide phosphoethanolamine (CPE), lysophosphatidylcholine (LPC) and lysophosphatidylethanolamine (LPE), but not on lysophosphatidylserine (LPS), and lysophosphatidylglycerol (LPG). It acts by transphosphatidylation, releasing exclusively cyclic phosphate products as second products. Induces dermonecrosis, hemolysis, increased vascular permeability, edema, inflammatory response, and platelet aggregation. The chain is Dermonecrotic toxin LsaSicTox-alphaIB2i from Loxosceles sabina (Tucson recluse spider).